The primary structure comprises 244 residues: Gas vesicle protein F (244 aa).

Belongs to the gas vesicle GvpF/GvpL family. In terms of assembly, binds GvpA.

It is found in the gas vesicle. A minor component of the gas vesicle, may be involved in preventing GvpA aggregation during gas vesicle nucleation. Gas vesicles (GV) are hollow, gas filled proteinaceous nanostructures. During planktonic growth they allow positioning of the organism at a favorable depth for light or nutrient acquisition. Functionally, cluster expression in E.coli (gvpA1-gvpA2-gvpC-gvpN-gvpJ-gvpK-gvpF-gvpG-gvpV-gvpW) allows cells to float and produces irregularly shaped gas vesicles. This is Gas vesicle protein F from Nostoc sp. (strain PCC 7120 / SAG 25.82 / UTEX 2576).